The chain runs to 311 residues: 4-diphosphocytidyl-2-C-methyl-D-erythritol kinase (311 aa).

The active site involves K16. Position 100–110 (100–110 (PIGAGLAGGSS)) interacts with ATP. D142 is a catalytic residue.

The protein belongs to the GHMP kinase family. IspE subfamily.

It catalyses the reaction 4-CDP-2-C-methyl-D-erythritol + ATP = 4-CDP-2-C-methyl-D-erythritol 2-phosphate + ADP + H(+). It functions in the pathway isoprenoid biosynthesis; isopentenyl diphosphate biosynthesis via DXP pathway; isopentenyl diphosphate from 1-deoxy-D-xylulose 5-phosphate: step 3/6. Functionally, catalyzes the phosphorylation of the position 2 hydroxy group of 4-diphosphocytidyl-2C-methyl-D-erythritol. The chain is 4-diphosphocytidyl-2-C-methyl-D-erythritol kinase from Prochlorococcus marinus (strain MIT 9215).